The primary structure comprises 152 residues: UPF0178 protein Bcer98_3021 (152 aa).

Belongs to the UPF0178 family.

This is UPF0178 protein Bcer98_3021 from Bacillus cytotoxicus (strain DSM 22905 / CIP 110041 / 391-98 / NVH 391-98).